Consider the following 66-residue polypeptide: Alpha-conotoxin GIB (66 aa).

The N-terminal stretch at Met-1–Ser-21 is a signal peptide. Positions Phe-22–Lys-49 are excised as a propeptide. 2 disulfides stabilise this stretch: Cys-51-Cys-56 and Cys-52-Cys-62. The residue at position 64 (Gly-64) is a Glycine amide.

It belongs to the conotoxin A superfamily. In terms of tissue distribution, expressed by the venom duct.

The protein localises to the secreted. Its function is as follows. Alpha-conotoxins act on postsynaptic membranes, they bind to the nicotinic acetylcholine receptors (nAChR) and thus inhibit them. Both the globular (with C1-C3; C2-C4 disulfide pattern) and ribbon (C1-C4; C2-C3) isomers reversibly inhibit human muscle-type alpha-1-beta-1-delta-epsilon/CHRNA1-CHRNB1-CHRND-CHRNE nAChRs (IC(50)=116 nM and IC(50)=643 nM, respectively). Both isomers also inhibit alpha-7/CHRNA7 and alpha-9-alpha-10/CHRNA9-CHRNA10 (IC(50)=1113 nM by globular isomer) nAChRs. The sequence is that of Alpha-conotoxin GIB from Conus geographus (Geography cone).